A 443-amino-acid chain; its full sequence is MTTQTSTKYSIEVVDYDADLVLQCATIQSTFESPSRDSARSKVSITTETEEKSEDELRSIRGTVVESTTQKPIIQGSFFPYEFSEHEQEELKEKMAQLNHCLEDCELDYSFEGTIIRVFYYKKWYISTHRKLNADRSKWGSNVSFKRLFEQGLADSYGLSLNELYQQLNLRCNYTFLITADENTRFVCVPNTAKKVYFIRSNDPQERFITVAKPPKPPQSLTRVEQIFAWVKALQYPYTYQGLLLTHKSGSQYRIINNEYATLFKVRNNEQSIPYRYLQLRVAQDDASIALLKQLFPQYTATFQSHEQSVDWLVDVIYHEYTKRKQRSLLPSDLTTTPQIDQRMYLFIKNKLINKGVITKERIKALLWMEEPSNLNQMIRLVNHMRHVREKSRSPQLEADLARLNLNSSPNTTLPDGDGVPKRKKIKYSKIPVELTFKKPSPF.

A coiled-coil region spans residues 82–110; sequence EFSEHEQEELKEKMAQLNHCLEDCELDYS.

The protein belongs to the IIV-6 393L family.

This Aedes vexans (Inland floodwater mosquito) protein is Immediate-early protein ICP-46 homolog.